The sequence spans 331 residues: L-lactate dehydrogenase A chain (331 aa).

NAD(+)-binding positions include glycine 29–lysine 57 and arginine 98. Substrate contacts are provided by arginine 105, asparagine 137, and arginine 168. Asparagine 137 contacts NAD(+). Residue histidine 192 is the Proton acceptor of the active site. Threonine 247 contacts substrate.

The protein belongs to the LDH/MDH superfamily. LDH family. In terms of assembly, homotetramer.

The protein localises to the cytoplasm. The catalysed reaction is (S)-lactate + NAD(+) = pyruvate + NADH + H(+). It functions in the pathway fermentation; pyruvate fermentation to lactate; (S)-lactate from pyruvate: step 1/1. In terms of biological role, interconverts simultaneously and stereospecifically pyruvate and lactate with concomitant interconversion of NADH and NAD(+). The sequence is that of L-lactate dehydrogenase A chain (ldha) from Chaenocephalus aceratus (Blackfin icefish).